A 58-amino-acid chain; its full sequence is Curromycin resistance protein (58 aa).

Positions 1 to 37 (MSVVALGATSITPPHGPESQGRPFPARGPVRPSARAR) are disordered. Positions 25-37 (PARGPVRPSARAR) are enriched in low complexity.

The polypeptide is Curromycin resistance protein (cre) (Streptomyces hygroscopicus).